Reading from the N-terminus, the 20-residue chain is Cytochrome P450 3A5 (20 aa).

It belongs to the cytochrome P450 family. Heme serves as cofactor.

The protein resides in the endoplasmic reticulum membrane. Its subcellular location is the microsome membrane. The catalysed reaction is an organic molecule + reduced [NADPH--hemoprotein reductase] + O2 = an alcohol + oxidized [NADPH--hemoprotein reductase] + H2O + H(+). Its function is as follows. 6-beta-testosterone hydroxylase. This is Cytochrome P450 3A5 from Papio sp. (Baboon).